The primary structure comprises 327 residues: Deoxynucleotidyltransferase terminal-interacting protein 1 (327 aa).

Residues 1 to 11 (MGATGDTGGPR) show a composition bias toward gly residues. Disordered regions lie at residues 1-34 (MGAT…PVLT) and 146-172 (KRGR…LPGH). The segment at 55 to 146 (MTTSFTDPAI…RLAHELPGIK (92 aa)) is important for dimerization. Over residues 146-161 (KRGRQAEEESHREAPF) the composition is skewed to basic and acidic residues. Residues 157-171 (REAPFPKRGKVGLPG) constitute a DNA-binding region (a.T hook). The Nuclear localization signal signature appears at 162 to 168 (PKRGKVG). Residues 195–314 (REGPKWDPAR…MRKYMETLRT (120 aa)) form an important for DNA and nucleosome binding region. Positions 214-235 (GSRANKALGMGGTRGRIYIKHP) form a DNA-binding region, H-T-H motif.

In terms of assembly, monomer and homodimer. A minor proportion may form homotrimers. Interacts with ZNF541. Interacts with the terminal deoxynucleotidyltransferase DNTT. Interacts with TRERF1. Identified in a histone deacetylase complex that contains DNTTIP1, HDAC1 and MIDEAS; this complex assembles into a tetramer that contains four copies of each protein chain. Component of a histone deacetylase complex containing DNTTIP1, ZNF541, HDAC1 and HDAC2. Identified in a complex with KCTD19, HDAC1, HDAC2 and ZNF541. As to expression, expressed in thymus, bone marrow and spleen.

It localises to the nucleus. Its function is as follows. Increases DNTT terminal deoxynucleotidyltransferase activity (in vitro). Also acts as a transcriptional regulator, binding to the consensus sequence 5'-GNTGCATG-3' following an AT-tract. Associates with RAB20 promoter and positively regulates its transcription. Binds DNA and nucleosomes; may recruit HDAC1 complexes to nucleosomes or naked DNA. The sequence is that of Deoxynucleotidyltransferase terminal-interacting protein 1 (Dnttip1) from Rattus norvegicus (Rat).